Consider the following 498-residue polypeptide: MALAGTGVFAEILDGEVYRYYADGEWRTSASGKSVAIVNPTTRKTQYRVQACTQEEVNKAMDAAKVAQKAWARTPLWKRADVLHKAAAILKEHKAPIAECLVKEIAKPAKDAVSEVVRSGDLVSYTAEEGVRILGEGKLVVSDSFPGNERNKYCLSSKIPLGVVLAIPPFNYPANLAGSKIGPALIAGNALVLKPPTQGAVAALHMVHCFHLAGFPKGLISCVTGKGSEIGDFLTMHPGVNCISFTGGDTGIAISKKAGMVPLQMELGGKDACIVLEDADLDLVSANIVKGGFSYSGQRCTAVKVVLIMESIADAVVQKVNAKLAKLKVGPPEDDSDITPVVTESSANFIEGLVMDAKEKGATFCQEYRREGNLIWPLLLDHVRPDMRIAWEEPFGPVLPVIRINSVEEGIHHCNASNFGLQGCIFTRDINKAILISDAMETGTVQINSAPARGPDHFSFQGLKDSGIGSQGITNSINMMTKVKSTVINLPSPSYTMG.

Residues R118 and 171–172 (NY) contribute to the substrate site. Positions 194, 197, and 232 each coordinate NADP(+). An NAD(+)-binding site is contributed by 247–251 (GGDTG). E266 acts as the Proton acceptor in catalysis. Residue 299-301 (RCT) participates in substrate binding. C300 (nucleophile) is an active-site residue. Position 393 (E393) interacts with NADP(+). R453 is a substrate binding site.

This sequence belongs to the aldehyde dehydrogenase family.

It localises to the cytoplasm. The catalysed reaction is D-glyceraldehyde 3-phosphate + NADP(+) + H2O = (2R)-3-phosphoglycerate + NADPH + 2 H(+). Important as a means of generating NADPH for biosynthetic reactions. In Zea mays (Maize), this protein is NADP-dependent glyceraldehyde-3-phosphate dehydrogenase (GPN1).